The sequence spans 344 residues: Protein RecA (344 aa).

65-72 (GPESSGKT) lines the ATP pocket.

The protein belongs to the RecA family.

It is found in the cytoplasm. Its function is as follows. Can catalyze the hydrolysis of ATP in the presence of single-stranded DNA, the ATP-dependent uptake of single-stranded DNA by duplex DNA, and the ATP-dependent hybridization of homologous single-stranded DNAs. It interacts with LexA causing its activation and leading to its autocatalytic cleavage. The polypeptide is Protein RecA (Nitratiruptor sp. (strain SB155-2)).